The sequence spans 90 residues: U7-theraphotoxin-Hhn1a 5 (90 aa).

Positions 1-19 are cleaved as a signal peptide; the sequence is MKTAIFTVVLALAVFAVLS. Residues 20–50 constitute a propeptide that is removed on maturation; sequence FGWEANEKALSEESTELIHEKEAASETEARE. 3 cysteine pairs are disulfide-bonded: Cys-51/Cys-65, Cys-58/Cys-70, and Cys-64/Cys-81.

Belongs to the neurotoxin 10 (Hwtx-1) family. 13 (Hntx-13) subfamily. As to expression, expressed by the venom gland.

It is found in the secreted. Functionally, ion channel inhibitor. This Cyriopagopus hainanus (Chinese bird spider) protein is U7-theraphotoxin-Hhn1a 5.